Reading from the N-terminus, the 261-residue chain is Aquaporin-8 (261 aa).

The Cytoplasmic portion of the chain corresponds to Met1–Gln36. A helical membrane pass occupies residues Pro37–Ile57. Cys53 is modified (cysteine persulfide). Cys53 is modified (cysteine sulfenic acid (-SOH)). The Extracellular portion of the chain corresponds to Glu58–Gly84. Residues Asn85–Leu105 traverse the membrane as a helical segment. An NPA 1 motif is present at residues Asn92 to Ala94. Over Lys106 to Thr107 the chain is Cytoplasmic. The helical transmembrane segment at Met108 to Ala128 threads the bilayer. Over Lys129 to Glu156 the chain is Extracellular. An N-linked (GlcNAc...) asparagine glycan is attached at Asn139. Residues Ala157–Val177 form a helical membrane-spanning segment. The Cytoplasmic portion of the chain corresponds to Asn178 to Gly183. The helical transmembrane segment at Pro184 to Ile204 threads the bilayer. The Extracellular portion of the chain corresponds to Ser205–Trp228. The NPA 2 motif lies at Asn210–Ala212. A helical transmembrane segment spans residues Ile229–Ile249. The Cytoplasmic segment spans residues Gly250–Arg261.

The protein belongs to the MIP/aquaporin (TC 1.A.8) family. Post-translationally, sulfenylation at Cys-53(C53-SOH) when hydrogen peroxide flows through the AQP8 channel, making it susceptible to hydrogen sulfide produced by CBS. In terms of processing, persulfidation at Cys-53 is required to gate AQP8 channel; under stress condition, hydrogen peroxide accumulates in the cell leading to CBS activation that produces hydrogen sulfide inducing persulfidation of oxidized Cys-53 (C53-SOH). N-glycosylated.

Its subcellular location is the cell membrane. It localises to the mitochondrion inner membrane. The protein resides in the apical cell membrane. The protein localises to the basolateral cell membrane. It is found in the smooth endoplasmic reticulum membrane. It carries out the reaction H2O(in) = H2O(out). The enzyme catalyses H2O2(out) = H2O2(in). It catalyses the reaction formamide(out) = formamide(in). The catalysed reaction is methylamine(out) = methylamine(in). Its activity is regulated as follows. Reversibly gated by a two-step sulfenylation-persulfidation process in cells undergoing diverse stresses. In terms of biological role, channel that allows the facilitated permeation of water and uncharged molecules, such as hydrogen peroxide and the neutral form of ammonia (NH3), through cellular membranes such as plasma membrane, inner mitochondrial membrane and endoplasmic reticulum membrane of several tissues. The transport of ammonia neutral form induces a parallel transport of proton, at alkaline pH when the concentration of ammonia is high. However, it is unclear whether the transport of proton takes place via the aquaporin or via an endogenous pathway. Also, may transport ammonia analogs such as formamide and methylamine, a transport favourited at basic pH due to the increase of unprotonated (neutral) form, which is expected to favor diffusion. Does not transport urea or glycerol. The water transport mechanism is mercury- and copper-sensitive and passive in response to osmotic driving forces. At the canicular plasma membrane, mediates the osmotic transport of water toward the bile canaliculus and facilitates the cAMP-induced bile canalicular water secretion, a process involved in bile formation. In addition, mediates the hydrogen peroxide release from hepatocyte mitochondria that modulates the SREBF2-mediated cholesterol synthesis and facilitates the mitochondrial ammonia uptake which is metabolized into urea, mainly under glucagon stimulation. In B cells, transports the CYBB-generated hydrogen peroxide from the external leaflet of the plasma membrane to the cytosol to promote B cell activation and differentiation for signal amplification. In the small intestine and colon system, mediates water transport through mitochondria and apical membrane of epithelial cells. May play an important role in the adaptive response of proximal tubule cells to acidosis possibly facilitating mitochondrial ammonia transport. This Notomys alexis (Spinifex hopping mouse) protein is Aquaporin-8.